The sequence spans 299 residues: 4-diphosphocytidyl-2-C-methyl-D-erythritol kinase (299 aa).

Lysine 11 is an active-site residue. 94–104 (PQGGGLGGGSS) contacts ATP. Residue aspartate 136 is part of the active site.

This sequence belongs to the GHMP kinase family. IspE subfamily.

It carries out the reaction 4-CDP-2-C-methyl-D-erythritol + ATP = 4-CDP-2-C-methyl-D-erythritol 2-phosphate + ADP + H(+). It functions in the pathway isoprenoid biosynthesis; isopentenyl diphosphate biosynthesis via DXP pathway; isopentenyl diphosphate from 1-deoxy-D-xylulose 5-phosphate: step 3/6. Catalyzes the phosphorylation of the position 2 hydroxy group of 4-diphosphocytidyl-2C-methyl-D-erythritol. The sequence is that of 4-diphosphocytidyl-2-C-methyl-D-erythritol kinase from Bordetella pertussis (strain Tohama I / ATCC BAA-589 / NCTC 13251).